We begin with the raw amino-acid sequence, 766 residues long: 5-methyltetrahydropteroyltriglutamate--homocysteine methyltransferase (766 aa).

5-methyltetrahydropteroyltri-L-glutamate is bound by residues Arg16–Lys19 and Lys119. Residues Ile440 to Ser442 and Glu493 each bind L-homocysteine. Residues Ile440–Ser442 and Glu493 contribute to the L-methionine site. 5-methyltetrahydropteroyltri-L-glutamate is bound by residues Arg524–Cys525 and Trp570. L-homocysteine is bound at residue Asp608. Residue Asp608 coordinates L-methionine. Position 614 (Glu614) interacts with 5-methyltetrahydropteroyltri-L-glutamate. Residues His650, Cys652, and Glu674 each contribute to the Zn(2+) site. His703 (proton donor) is an active-site residue. Cys735 is a binding site for Zn(2+).

The protein belongs to the vitamin-B12 independent methionine synthase family. It depends on Zn(2+) as a cofactor.

The catalysed reaction is 5-methyltetrahydropteroyltri-L-glutamate + L-homocysteine = tetrahydropteroyltri-L-glutamate + L-methionine. Its pathway is amino-acid biosynthesis; L-methionine biosynthesis via de novo pathway; L-methionine from L-homocysteine (MetE route): step 1/1. Catalyzes the transfer of a methyl group from 5-methyltetrahydrofolate to homocysteine resulting in methionine formation. The sequence is that of 5-methyltetrahydropteroyltriglutamate--homocysteine methyltransferase from Pseudomonas aeruginosa (strain UCBPP-PA14).